We begin with the raw amino-acid sequence, 553 residues long: Muellerian-inhibiting factor (553 aa).

An N-terminal signal peptide occupies residues 1 to 22; sequence MQGPHLSLLLLLLATMGAVLQA. The propeptide occupies 23–445; the sequence is DTVEELTNTR…GREGRGRAGR (423 aa). 2 N-linked (GlcNAc...) asparagine glycosylation sites follow: N325 and N409. Cystine bridges form between C455–C519, C481–C550, and C485–C552.

The protein belongs to the TGF-beta family. As to quaternary structure, homodimer; disulfide-linked. Preproprotein is proteolytically processed to generate N- and C-terminal cleavage products that homodimerize and associate to form a biologically active non-covalent complex. Binding of the non-covalent complex to AMHR2 induces dissociation of the pro-region from the mature C-terminal dimer. The N-terminal portion of the protein, despite having no intrinsic activity, has the role of amplifying the activity of the C-terminus. In terms of tissue distribution, mainly expressed in granulosa cells from preantral and small antral follicles.

Its subcellular location is the secreted. Functionally, plays an important role in several reproductive functions. Induces Muellerian duct regression during male fetal sexual differentiation and plays a role in Leydig cell differentiation and function. In female acts as a negative regulator of the primordial to primary follicle transition and decreases FSH sensitivity of growing follicles. AMH signals by binding to a specific type-II receptor, AMHR2, that heterodimerizes with type-I receptors (ACVR1 and BMPR1A), and recruiting SMAD proteins that are translocated to the nucleus to regulate target gene expression. The polypeptide is Muellerian-inhibiting factor (Amh) (Rattus norvegicus (Rat)).